We begin with the raw amino-acid sequence, 164 residues long: S-ribosylhomocysteine lyase (164 aa).

Fe cation contacts are provided by His-61, His-65, and Cys-131.

The protein belongs to the LuxS family. In terms of assembly, homodimer. Fe cation serves as cofactor.

The enzyme catalyses S-(5-deoxy-D-ribos-5-yl)-L-homocysteine = (S)-4,5-dihydroxypentane-2,3-dione + L-homocysteine. Its function is as follows. Involved in the synthesis of autoinducer 2 (AI-2) which is secreted by bacteria and is used to communicate both the cell density and the metabolic potential of the environment. The regulation of gene expression in response to changes in cell density is called quorum sensing. Catalyzes the transformation of S-ribosylhomocysteine (RHC) to homocysteine (HC) and 4,5-dihydroxy-2,3-pentadione (DPD). This chain is S-ribosylhomocysteine lyase, found in Bifidobacterium longum (strain NCC 2705).